The sequence spans 347 residues: Ferredoxin--NADP reductase 1 (347 aa).

FAD contacts are provided by Thr26, Asp45, Gln53, Tyr58, Val98, Phe133, Asp298, and Ser339.

This sequence belongs to the ferredoxin--NADP reductase type 2 family. Homodimer. FAD serves as cofactor.

It carries out the reaction 2 reduced [2Fe-2S]-[ferredoxin] + NADP(+) + H(+) = 2 oxidized [2Fe-2S]-[ferredoxin] + NADPH. The polypeptide is Ferredoxin--NADP reductase 1 (Chloroherpeton thalassium (strain ATCC 35110 / GB-78)).